The sequence spans 248 residues: 14-3-3-like protein 1 (248 aa).

This sequence belongs to the 14-3-3 family. Interacts with daf-16 and sir-2.1. Interacts with atgl-1. Interacts with hcf-1.

It is found in the cytoplasm. It localises to the nucleus. Required to modulate lifespan, in concert with hcf-1, acting redundantly with 14-3-3-like protein ftt-2. This chain is 14-3-3-like protein 1 (par-5), found in Caenorhabditis elegans.